The following is a 94-amino-acid chain: Defensin alpha 5 (94 aa).

The N-terminal stretch at 1–19 (MRTIAILAAILLVALQAQA) is a signal peptide. Disulfide bonds link C65–C93, C67–C82, and C72–C92.

It belongs to the alpha-defensin family. Homodimer. Homotetramer. Interacts with B.antracis lef/lethal factor. Post-translationally, glycosylated. Proteolytically cleaved at Arg-62 by trypsin. Both the propeptide form proHD5/HD5(20-94) and HD5(56-94) are cleaved into the lumenal peptide form HD5(63-94) by trypsin. Unprocessed proHD5 exerts antimicrobial activities, but peptide potency is enhanced by peptide processing. Proteolytically cleaved in duodenal fluid; derived fragments are antimicrobially active against commensal bacteria (in vitro).

The protein resides in the secreted. It is found in the cytoplasmic vesicle. Its subcellular location is the secretory vesicle. Host-defense peptide that maintains sterility in the urogenital system. Has antimicrobial activity against a wide range of bacteria, including Gram-negative E.coli, P.aeruginosa and S.typhimurium, and Gram-positive E.aerogenes, S.aureus, B.cereus, E.faecium and L.monocytogenes. Confers resistance to intestinal infection by S.typhimurium. Exhibits antimicrobial activity against enteric commensal bacteria such as B.adolescentis, L.acidophilus, B.breve, L.fermentum, B.longum and S.thermophilus. Binds to bacterial membranes and causes membrane disintegration. Induces the secretion of the chemokine IL-8 by intestinal epithelial cells. Binds to B.antracis lef/lethal factor, a major virulence factor from B.anthracis, and neutralizes its enzymatic activity. The protein is Defensin alpha 5 (DEFA5) of Pan troglodytes (Chimpanzee).